Reading from the N-terminus, the 426-residue chain is MERPVKDGIIYVQHCKFGKRTWRKIRAQLFAASPFGVARMEKFDARDHGTVSDISLQRCARRVIRLSDCVSVGPMGTESCPKATAAFYLTTTEKNYVLAAEQRDEWIEQLCQLAFQGKKEAEQSSSTGLQPIPMEENCLYSSWQDLTEFPVLVLRTEAAARCELHGHYVLAALPHSLTLKDAQSQQPLLTWPYPFLRKFGQDQNIFSFEAGRRSDSGEGTFTFSTPRAAELCRAVAAAIACQQQGQESPQPSAQGLSNQPWGAEAEDPQCSPTLGRAHSGSHSASYPSLNLLRFPPVEPEAPAPIVYASIARGQQPHFRPCPGQPLPEHLYENIFTAQPRPLAEEEAEEEEGRWELGCRQAPEGHSSEAAVPYPARSAPQPHTQRWAPGGSRGGAEEPSRPKPQRTLRAKLVRLLSRDGPGARDWS.

Residues 4–115 (PVKDGIIYVQ…WIEQLCQLAF (112 aa)) enclose the PH domain. Positions 145-249 (DLTEFPVLVL…ACQQQGQESP (105 aa)) constitute an IRS-type PTB domain. The disordered stretch occupies residues 243–282 (QQGQESPQPSAQGLSNQPWGAEAEDPQCSPTLGRAHSGSH). Residues 247-260 (ESPQPSAQGLSNQP) are compositionally biased toward polar residues. Tyrosine 331 carries the post-translational modification Phosphotyrosine. A disordered region spans residues 357–426 (GCRQAPEGHS…RDGPGARDWS (70 aa)). Residues 402–411 (KPQRTLRAKL) are compositionally biased toward basic residues.

The protein belongs to the DOK family. Type A subfamily. As to quaternary structure, homooligomer. Interacts with GRB2 and INPP5D/SHIP. In terms of processing, tyrosine-phosphorylated in the presence of GRB2.

The protein resides in the cytoplasm. Its subcellular location is the cell membrane. DOK proteins are enzymatically inert adaptor or scaffolding proteins. They provide a docking platform for the assembly of multimolecular signaling complexes. Plays a role as negative regulator of the mobilization of calcium ions and of calcium signaling. This chain is Docking protein 3 (DOK3), found in Gallus gallus (Chicken).